Here is a 137-residue protein sequence, read N- to C-terminus: ATP synthase epsilon chain, chloroplastic (137 aa).

It belongs to the ATPase epsilon chain family. As to quaternary structure, F-type ATPases have 2 components, CF(1) - the catalytic core - and CF(0) - the membrane proton channel. CF(1) has five subunits: alpha(3), beta(3), gamma(1), delta(1), epsilon(1). CF(0) has three main subunits: a, b and c.

It is found in the plastid. Its subcellular location is the chloroplast thylakoid membrane. Its function is as follows. Produces ATP from ADP in the presence of a proton gradient across the membrane. In Pisum sativum (Garden pea), this protein is ATP synthase epsilon chain, chloroplastic.